The following is a 520-amino-acid chain: Cobyric acid synthase (520 aa).

In terms of domain architecture, GATase cobBQ-type spans 254–465; it reads ELDIAVVRLP…IHGILDNDGL (212 aa). C335 serves as the catalytic Nucleophile. Residue H457 is part of the active site.

It belongs to the CobB/CobQ family. CobQ subfamily.

Its pathway is cofactor biosynthesis; adenosylcobalamin biosynthesis. Its function is as follows. Catalyzes amidations at positions B, D, E, and G on adenosylcobyrinic A,C-diamide. NH(2) groups are provided by glutamine, and one molecule of ATP is hydrogenolyzed for each amidation. This Sorangium cellulosum (strain So ce56) (Polyangium cellulosum (strain So ce56)) protein is Cobyric acid synthase.